The primary structure comprises 486 residues: Arginine deiminase (486 aa).

C476 (amidino-cysteine intermediate) is an active-site residue.

The protein belongs to the arginine deiminase family.

It is found in the cytoplasm. It carries out the reaction L-arginine + H2O = L-citrulline + NH4(+). The protein operates within amino-acid degradation; L-arginine degradation via ADI pathway; carbamoyl phosphate from L-arginine: step 1/2. Its function is as follows. Involved in the arginine deiminase pathway of fermentative arginine utilization. In Halobacterium salinarum (strain ATCC 29341 / DSM 671 / R1), this protein is Arginine deiminase (arcA).